The following is a 780-amino-acid chain: LPS-assembly protein LptD (780 aa).

A signal peptide spans 1 to 24; the sequence is MKKRLPTLLASLIGSALYSQQALA.

Belongs to the LptD family. Component of the lipopolysaccharide transport and assembly complex. Interacts with LptE and LptA.

The protein localises to the cell outer membrane. In terms of biological role, together with LptE, is involved in the assembly of lipopolysaccharide (LPS) at the surface of the outer membrane. The sequence is that of LPS-assembly protein LptD from Sodalis glossinidius (strain morsitans).